Reading from the N-terminus, the 455-residue chain is Deoxyribodipyrimidine photo-lyase (455 aa).

Residues 2 to 131 (SVAVVLFTSD…ELHVHDAVVT (130 aa)) enclose the Photolyase/cryptochrome alpha/beta domain. Residues tyrosine 219 and 231–235 (TSRLS) each bind FAD. 2 interaction with DNA regions span residues 266-273 (QLAWRDFH) and 330-331 (NR). Position 361–363 (361–363 (DGD)) interacts with FAD. Glutamine 392 is a binding site for DNA.

The protein belongs to the DNA photolyase class-1 family. As to quaternary structure, monomer. The cofactor is FAD. Coenzyme F420-(gamma-Glu)n serves as cofactor.

It catalyses the reaction cyclobutadipyrimidine (in DNA) = 2 pyrimidine residues (in DNA).. Its function is as follows. Involved in repair of UV radiation-induced DNA damage. Catalyzes the light-dependent monomerization (300-600 nm) of cyclobutyl pyrimidine dimers (in cis-syn configuration), which are formed between adjacent bases on the same DNA strand upon exposure to ultraviolet radiation. The sequence is that of Deoxyribodipyrimidine photo-lyase (phr) from Streptomyces griseus.